The chain runs to 83 residues: ATP synthase subunit c, chloroplastic (83 aa).

The next 2 helical transmembrane spans lie at 3–23 (PIIS…AAIG) and 57–77 (LAFM…LLFA).

This sequence belongs to the ATPase C chain family. As to quaternary structure, F-type ATPases have 2 components, F(1) - the catalytic core - and F(0) - the membrane proton channel. F(1) has five subunits: alpha(3), beta(3), gamma(1), delta(1), epsilon(1). F(0) has four main subunits: a(1), b(1), b'(1) and c(10-14). The alpha and beta chains form an alternating ring which encloses part of the gamma chain. F(1) is attached to F(0) by a central stalk formed by the gamma and epsilon chains, while a peripheral stalk is formed by the delta, b and b' chains.

It is found in the plastid. The protein resides in the chloroplast thylakoid membrane. F(1)F(0) ATP synthase produces ATP from ADP in the presence of a proton or sodium gradient. F-type ATPases consist of two structural domains, F(1) containing the extramembraneous catalytic core and F(0) containing the membrane proton channel, linked together by a central stalk and a peripheral stalk. During catalysis, ATP synthesis in the catalytic domain of F(1) is coupled via a rotary mechanism of the central stalk subunits to proton translocation. In terms of biological role, key component of the F(0) channel; it plays a direct role in translocation across the membrane. A homomeric c-ring of between 10-14 subunits forms the central stalk rotor element with the F(1) delta and epsilon subunits. In Diacronema lutheri (Unicellular marine alga), this protein is ATP synthase subunit c, chloroplastic.